The following is a 180-amino-acid chain: Major urinary protein 2 (180 aa).

The signal sequence occupies residues 1–18 (MKMLLLLCLGLTLVCVHA). A disulfide bond links Cys82 and Cys175.

Belongs to the calycin superfamily. Lipocalin family. Abundant in the urine of adult male mice but absent from that of females.

The protein localises to the secreted. Binds pheromones that are released from drying urine of males. These pheromones affect the sexual behavior of females. The sequence is that of Major urinary protein 2 (Mup2) from Mus musculus (Mouse).